The following is a 333-amino-acid chain: Gramillins biosynthetic cluster protein FGSG_00039 (333 aa).

It participates in mycotoxin biosynthesis. In terms of biological role, part of the gene cluster that mediates the biosynthesis of gramillins A and B, bicyclic lipopeptides that induce cell death in maize leaves but not in wheat leaves. The nonribosomal peptide synthetase GRA1 incorporates respectively a glutamic adic (Glu), a leucine (Leu), a serine (Ser), a hydroxyglutamine (HOGln), a 2-amino decanoic acid, and 2 cysteins (CysB and CysA). The biosynthesis of 2-amino decanoic acid incorporated in gramillins could be initiated by a fatty acid synthase composed of the alpha and beta subunits FGSG_00036 and FGSG_11656. The cytochrome P450 monooxygenase FGSG_15680 could hydroxylate the fatty acid chain. Subsequent oxidation to the ketone by the oxidoreductase FGSG_00048 and transamination by aminotransferase FGSG_00049 could form 2-amino-decanoic acid. On the other hand, FGSG_15680 could also be responsible for the HO-modified glutamine at the gamma-position. Whether hydroxylation occurs on the fully assembled product or on the Gln residue prior to assembly into the gramillins requires further proof. The thioredoxin FGSG_00043 could also be required for the disulfide-bond formation between CysA and CysB. The specific involvement of the remaining proteins from the cluster is more difficult to discern, but could have broader regulatory (FGSG_00040 and FGSG_11657) or enzymatic functions (FGSG_00044 and FGSG_00045). The final C-domain of GRA1 does not possess the expected sequence of a termination CT domain, often implicated in macrocyclization and release of a cyclopeptidein fungal NRPs; and the thioesterase FGSG_00047 may act in concert with the terminal C-domain of GRA1 to catalyze the formation of the macrocyclic anhydride and release of the products. The protein is Gramillins biosynthetic cluster protein FGSG_00039 of Gibberella zeae (strain ATCC MYA-4620 / CBS 123657 / FGSC 9075 / NRRL 31084 / PH-1) (Wheat head blight fungus).